The chain runs to 187 residues: Ribosome-recycling factor (187 aa).

Belongs to the RRF family.

The protein localises to the cytoplasm. Responsible for the release of ribosomes from messenger RNA at the termination of protein biosynthesis. May increase the efficiency of translation by recycling ribosomes from one round of translation to another. The protein is Ribosome-recycling factor of Ruegeria pomeroyi (strain ATCC 700808 / DSM 15171 / DSS-3) (Silicibacter pomeroyi).